A 549-amino-acid polypeptide reads, in one-letter code: Cation/acetate symporter ActP (549 aa).

Helical transmembrane passes span 32–54 (IQAIIMFVLFVGFTLYITYWASK), 75–97 (GMAIAGDFMSAASFLGISALVYT), 102–124 (GLIYSIGFLIGWPIILFLIAERL), 145–167 (IRILSAIGSLFVVALYLIAQMVG), 182–204 (VAVVLVGILMVLYVLFGGMLATT), 211–233 (AILLLAGATFMALMVMKIVNFNF), 263–285 (ALSLGLALMFGTAGLPHIIMRFF), 298–320 (FYATGFIGYFYILTFIIGFGAIL), 361–383 (AVAFATILAVVAGLTLAGASAVS), 404–423 (VSKITVVILGFIAIGLGILF), 428–450 (IAFMVGLAFSIAASCNFPIILLS), 462–484 (LVGGWLGLITAVVLMILGPTIWV), and 494–516 (YPYEYPALFSMIIAFIGSWLFSI).

It belongs to the sodium:solute symporter (SSF) (TC 2.A.21) family.

The protein localises to the cell inner membrane. Its function is as follows. Transports acetate. This Photorhabdus laumondii subsp. laumondii (strain DSM 15139 / CIP 105565 / TT01) (Photorhabdus luminescens subsp. laumondii) protein is Cation/acetate symporter ActP.